The chain runs to 683 residues: Glycine--tRNA ligase beta subunit (683 aa).

It belongs to the class-II aminoacyl-tRNA synthetase family. Tetramer of two alpha and two beta subunits.

Its subcellular location is the cytoplasm. The enzyme catalyses tRNA(Gly) + glycine + ATP = glycyl-tRNA(Gly) + AMP + diphosphate. In Pseudomonas putida (strain W619), this protein is Glycine--tRNA ligase beta subunit.